A 987-amino-acid chain; its full sequence is Mediator of RNA polymerase II transcription subunit 24 (987 aa).

6 consecutive short sequence motifs (LXXLL motif) follow at residues 128-132 (LHWLL), 344-348 (LTPLL), 446-450 (LDLLL), 555-559 (LVALL), 786-790 (LPGLL), and 855-859 (LMRLL). Serine 860 and serine 871 each carry phosphoserine.

The protein belongs to the Mediator complex subunit 24 family. As to quaternary structure, component of the Mediator complex, which is composed of MED1, MED4, MED6, MED7, MED8, MED9, MED10, MED11, MED12, MED13, MED13L, MED14, MED15, MED16, MED17, MED18, MED19, MED20, MED21, MED22, MED23, MED24, MED25, MED26, MED27, MED29, MED30, MED31, CCNC, CDK8 and CDC2L6/CDK11. The MED12, MED13, CCNC and CDK8 subunits form a distinct module termed the CDK8 module. Mediator containing the CDK8 module is less active than Mediator lacking this module in supporting transcriptional activation. Individual preparations of the Mediator complex lacking one or more distinct subunits have been variously termed ARC, CRSP, DRIP, PC2, SMCC and TRAP. Interacts with AR. Interacts with MED1 and MED10. Expressed in the adrenal gland, brain, epididymis, heart, kidney, liver, ovary, pancreas, prostate, skeletal muscle, small intestine, spleen, stomach, testis and thymus.

It is found in the nucleus. Functionally, component of the Mediator complex, a coactivator involved in the regulated transcription of nearly all RNA polymerase II-dependent genes. Mediator functions as a bridge to convey information from gene-specific regulatory proteins to the basal RNA polymerase II transcription machinery. Mediator is recruited to promoters by direct interactions with regulatory proteins and serves as a scaffold for the assembly of a functional preinitiation complex with RNA polymerase II and the general transcription factors. Required for basal and activator-dependent transcription. The polypeptide is Mediator of RNA polymerase II transcription subunit 24 (Med24) (Mus musculus (Mouse)).